The following is a 361-amino-acid chain: Chorismate synthase (361 aa).

Positions 48 and 54 each coordinate NADP(+). Residues 131 to 133, 243 to 244, Gly-287, 302 to 306, and Arg-328 contribute to the FMN site; these read RSS, NA, and KPTSS.

This sequence belongs to the chorismate synthase family. As to quaternary structure, homotetramer. FMNH2 serves as cofactor.

It carries out the reaction 5-O-(1-carboxyvinyl)-3-phosphoshikimate = chorismate + phosphate. It functions in the pathway metabolic intermediate biosynthesis; chorismate biosynthesis; chorismate from D-erythrose 4-phosphate and phosphoenolpyruvate: step 7/7. Catalyzes the anti-1,4-elimination of the C-3 phosphate and the C-6 proR hydrogen from 5-enolpyruvylshikimate-3-phosphate (EPSP) to yield chorismate, which is the branch point compound that serves as the starting substrate for the three terminal pathways of aromatic amino acid biosynthesis. This reaction introduces a second double bond into the aromatic ring system. The sequence is that of Chorismate synthase from Rhodopseudomonas palustris (strain BisB5).